Consider the following 267-residue polypeptide: Thiamine pyrophosphokinase 2 (267 aa).

The protein belongs to the thiamine pyrophosphokinase family. As to expression, expressed in leaves and at lower levels in flowers.

The protein resides in the cytoplasm. The protein localises to the cytosol. The catalysed reaction is thiamine + ATP = thiamine diphosphate + AMP + H(+). It participates in cofactor biosynthesis; thiamine diphosphate biosynthesis; thiamine diphosphate from thiamine: step 1/1. In terms of biological role, catalyzes the phosphorylation of thiamine to thiamine pyrophosphate (TPP). TPP is an active cofactor for enzymes involved in glycolysis and energy production. Plant leaves require high levels of TPP for photosynthesis and carbohydrate metabolism. This Arabidopsis thaliana (Mouse-ear cress) protein is Thiamine pyrophosphokinase 2.